The chain runs to 82 residues: Sec-independent protein translocase protein TatA (82 aa).

Residues 1-21 (MGGISIWQLLIIAVIIVLLFG) traverse the membrane as a helical segment. The tract at residues 46–82 (DEPAKDAKKDADFVPQNLEKKEAETVEKQKQNDKEQA) is disordered.

Belongs to the TatA/E family. As to quaternary structure, the Tat system comprises two distinct complexes: a TatABC complex, containing multiple copies of TatA, TatB and TatC subunits, and a separate TatA complex, containing only TatA subunits. Substrates initially bind to the TatABC complex, which probably triggers association of the separate TatA complex to form the active translocon.

It localises to the cell inner membrane. Functionally, part of the twin-arginine translocation (Tat) system that transports large folded proteins containing a characteristic twin-arginine motif in their signal peptide across membranes. TatA could form the protein-conducting channel of the Tat system. This chain is Sec-independent protein translocase protein TatA, found in Aliivibrio fischeri (strain MJ11) (Vibrio fischeri).